The primary structure comprises 396 residues: Protein nipi-4 (396 aa).

At Met-1–Tyr-20 the chain is on the extracellular side. N-linked (GlcNAc...) asparagine glycosylation is present at Asn-15. A helical membrane pass occupies residues Met-21 to Phe-41. The Cytoplasmic segment spans residues Cys-42–Tyr-396. The Protein kinase domain maps to Glu-81 to Val-368. Residues Ile-87 to Ile-95 and Lys-111 contribute to the ATP site.

It belongs to the protein kinase superfamily. Tyr protein kinase family. Expressed in the epidermis of larvae and adults and in vulval and rectal cells.

The protein resides in the membrane. Its function is as follows. Pseudokinase which plays a role in resistance to fungal infection by promoting expression of antimicrobial peptides (nlp-29, nlp-31, nlp-34, cnc-1, cnc-2 and cnc-4) in the epidermis. In addition, up-regulates nlp-29 expression upon physical wounding and in response to phorbol ester PMA treatment. The sequence is that of Protein nipi-4 from Caenorhabditis elegans.